Here is a 199-residue protein sequence, read N- to C-terminus: Glycerol-3-phosphate acyltransferase (199 aa).

Transmembrane regions (helical) follow at residues 3–23 (IKIL…AYIV), 55–75 (VITL…ATFI), 79–99 (FSYS…TIFL), 113–133 (VFFA…GLAF), and 155–175 (YFLG…LLII).

Belongs to the PlsY family. In terms of assembly, probably interacts with PlsX.

The protein resides in the cell inner membrane. It catalyses the reaction an acyl phosphate + sn-glycerol 3-phosphate = a 1-acyl-sn-glycero-3-phosphate + phosphate. Its pathway is lipid metabolism; phospholipid metabolism. In terms of biological role, catalyzes the transfer of an acyl group from acyl-phosphate (acyl-PO(4)) to glycerol-3-phosphate (G3P) to form lysophosphatidic acid (LPA). This enzyme utilizes acyl-phosphate as fatty acyl donor, but not acyl-CoA or acyl-ACP. The polypeptide is Glycerol-3-phosphate acyltransferase (Endomicrobium trichonymphae).